Reading from the N-terminus, the 504-residue chain is MTVLFILSAGLVAVFGYLVSWFIYCRTLHPLSKVPGPFWPSVTRLWLTYAVSRGELDVVQRDLHRRYGPLVRIAPDEIACADPEAIRKIYSTTSPLNKSDFYHIWDVGAFSKYPNAFAIVDENMHFERRRIVSSVYSMSTVLTLEPYIDNCSRLFVKRMTERTVPHEAIDLGDWFLWYAYDVIGELFFGHSLGFIENRGDEGGFLASLEVMLPVLTIAAASSPLVRGLIMGLFTLSSTARKGLKGMNHIIETARASVDKRASAVAEPGKGERKDLLHNLLNIVSSKGDKLDFGIEDVKNEAFAALTAGADATMIELQAIFYYLVKDRSVYEELRKEVDQAVETGKLSEFPSYSEVVQLPLLKATIKEALRLHPAVGFTMPRVVGQAGIELLGMYIPPGWKVGMNAAVVGRDEGVYGTDANTFRPERWIERTDSDMDRCNNLVFGAGTRTCIGKQIALSEIYKMVPLLIRKFDFALVDPSKSWTTHDYFFNKQSGVQVKVTVRGL.

The signal sequence occupies residues 1 to 16 (MTVLFILSAGLVAVFG). N-linked (GlcNAc...) asparagine glycans are attached at residues N97 and N150. Position 450 (C450) interacts with heme.

The protein belongs to the cytochrome P450 family. Heme serves as cofactor.

The enzyme catalyses griseophenone B + reduced [NADPH--hemoprotein reductase] + O2 + H(+) = desmethyl-dehydrogriseofulvin + oxidized [NADPH--hemoprotein reductase] + 2 H2O. Its pathway is secondary metabolite biosynthesis; terpenoid biosynthesis. In terms of biological role, cytochrome P450 monooxygenase; part of the gene cluster that mediates the biosynthesis of griseofulvin, an important antifungal drug that has been in use for a long time for treating dermatophyte infections. The first step of the pathway is the formation of the heptaketide backbone by gsfA which is initiated by priming with acetyl-CoA, followed by sequential condensations of 6 malonyl-CoA units. The resulting benzophenone can undergo a spontaneous dehydration to form norlichexanthone. However, the true precursor for the griseofulvin biosynthesis is not norlichexanthone, but the heptaketide benzophenone that is O-methylated at 3-OH by gsfB to produce griseophenone D which is further methylated at 9-OH by gsfC to yield griseophenone C. Griseophenone C is then substrate of halogenase gsfI which is responsible for the regio-specific chlorination at the C13 position to form griseophenone B. The cytochrome P450 gsfF catalyzes the coupling of orcinol and phloroglucinol rings in griseophenone B to form desmethyl-dehydrogriseofulvin A which is further methylated at 5-OH by gsfD to yield dehydrogriseofulvin. Finally, gsfE performs stereospecific reduction of enone 18 of dehydrogriseofulvin to afford the final product griseofulvin. The chain is Cytochrome P450 monooxygenase gsfF from Penicillium aethiopicum.